Consider the following 298-residue polypeptide: Lipoyl synthase (298 aa).

Positions 40, 45, 51, 67, 71, 74, and 280 each coordinate [4Fe-4S] cluster. The region spanning 53 to 269 (AVRRTATFMI…KEIALSKGFT (217 aa)) is the Radical SAM core domain.

This sequence belongs to the radical SAM superfamily. Lipoyl synthase family. It depends on [4Fe-4S] cluster as a cofactor.

The protein resides in the cytoplasm. It carries out the reaction [[Fe-S] cluster scaffold protein carrying a second [4Fe-4S](2+) cluster] + N(6)-octanoyl-L-lysyl-[protein] + 2 oxidized [2Fe-2S]-[ferredoxin] + 2 S-adenosyl-L-methionine + 4 H(+) = [[Fe-S] cluster scaffold protein] + N(6)-[(R)-dihydrolipoyl]-L-lysyl-[protein] + 4 Fe(3+) + 2 hydrogen sulfide + 2 5'-deoxyadenosine + 2 L-methionine + 2 reduced [2Fe-2S]-[ferredoxin]. It participates in protein modification; protein lipoylation via endogenous pathway; protein N(6)-(lipoyl)lysine from octanoyl-[acyl-carrier-protein]. Catalyzes the radical-mediated insertion of two sulfur atoms into the C-6 and C-8 positions of the octanoyl moiety bound to the lipoyl domains of lipoate-dependent enzymes, thereby converting the octanoylated domains into lipoylated derivatives. The sequence is that of Lipoyl synthase from Geobacillus sp. (strain WCH70).